The primary structure comprises 328 residues: dTDP-4-dehydrorhamnose 3,5-epimerase (328 aa).

Substrate contacts are provided by residues arginine 23, glutamate 28, 46-48, and arginine 58; that span reads QEN. The active-site Proton acceptor is the histidine 61. Lysine 70 and histidine 117 together coordinate substrate. Residue tyrosine 130 is the Proton donor of the active site. Substrate is bound by residues glutamate 141 and lysine 166.

The protein belongs to the dTDP-4-dehydrorhamnose 3,5-epimerase family. As to quaternary structure, homodimer.

The catalysed reaction is dTDP-4-dehydro-6-deoxy-alpha-D-glucose = dTDP-4-dehydro-beta-L-rhamnose. Its pathway is carbohydrate biosynthesis; dTDP-L-rhamnose biosynthesis. It participates in bacterial outer membrane biogenesis; LPS O-antigen biosynthesis. Functionally, catalyzes the epimerization of the C3' and C5'positions of dTDP-6-deoxy-D-xylo-4-hexulose, forming dTDP-6-deoxy-L-lyxo-4-hexulose. This Neisseria gonorrhoeae protein is dTDP-4-dehydrorhamnose 3,5-epimerase (rfbC).